Reading from the N-terminus, the 243-residue chain is Probable transcriptional regulatory protein BPP2422 (243 aa).

The disordered stretch occupies residues 1 to 21 (MAGHSKWANIQHRKGRQDAKR).

The protein belongs to the TACO1 family.

It localises to the cytoplasm. In Bordetella parapertussis (strain 12822 / ATCC BAA-587 / NCTC 13253), this protein is Probable transcriptional regulatory protein BPP2422.